Here is a 666-residue protein sequence, read N- to C-terminus: Protein scarlet (666 aa).

At 1–417 the chain is on the cytoplasmic side; the sequence is MSDSDSKRID…TIQWLRFIQK (417 aa). A disordered region spans residues 26–55; that stretch reads PVGSTIEVPSLDSTPKLSKRNSSERSLPLR. In terms of domain architecture, ABC transporter spans 69–316; it reads LVWRDLCVYT…FANHGYYCPE (248 aa). 108–115 is an ATP binding site; it reads GSSGSGKT. A helical membrane pass occupies residues 418 to 438; sequence IAMAFIIGACFAGTTEPSQLG. Residues 439–444 lie on the Extracellular side of the membrane; it reads VQAVQG. Residues 445 to 465 traverse the membrane as a helical segment; sequence ALFIMISENTYHPMYSVLNLF. Residues 466 to 490 lie on the Cytoplasmic side of the membrane; that stretch reads PQGFPLFMRETRSGLYSTGQYYAAN. The helical transmembrane segment at 491–511 threads the bilayer; it reads ILALLPGMIIEPLIFVIICYW. Residues 512 to 518 are Extracellular-facing; sequence LTGLRST. Residues 519–539 form a helical membrane-spanning segment; the sequence is FYAFGVTAMCVVLVMNVATAC. Residues 540-551 lie on the Cytoplasmic side of the membrane; sequence GCFFSTAFNSVP. The chain crosses the membrane as a helical span at residues 552-572; it reads LAMAYLVPLDYIFMITSGIFI. Over 573-639 the chain is Extracellular; it reads QVNSLPVAFW…YSFNESNVYR (67 aa). Residues N607 and N633 are each glycosylated (N-linked (GlcNAc...) asparagine). Residues 640–660 form a helical membrane-spanning segment; that stretch reads NLLAMVGLYFGFHLLGYYCLW. The Cytoplasmic segment spans residues 661 to 666; that stretch reads RRARKL.

Belongs to the ABC transporter superfamily. ABCG family. Eye pigment precursor importer (TC 3.A.1.204) subfamily. May form a heterodimer with w/white. As to expression, expressed in the eye, specifically in primary pigment cells, secondary pigment cells and retinula cells (at protein level).

The protein localises to the cytoplasmic vesicle membrane. The catalysed reaction is L-kynurenine(out) + ATP + H2O = L-kynurenine(in) + ADP + phosphate + H(+). In terms of biological role, ATP-dependent transporter of the ATP-binding cassette (ABC) family which transports various molecules including bioamines, neurotransmitters and metabolic intermediates. In the eye and probably in association with w/white, required for the transport of the eye brown pigment precursors, kynurenine and probably tryptophan, into pigment cell granules. In Malpighian tubules and pupal eyes, involved in kynurenine transport. Probably in association with w/white, plays a role in zinc storage granule biogenesis in Malpighian tubule principal epithelial cells. In Drosophila melanogaster (Fruit fly), this protein is Protein scarlet.